The sequence spans 72 residues: Metallothionein-like protein type 2 A (72 aa).

Belongs to the metallothionein superfamily. Type 15 family. Leaves and roots.

Functionally, metallothioneins have a high content of cysteine residues that bind various heavy metals. The sequence is that of Metallothionein-like protein type 2 A (MTA) from Solanum lycopersicum (Tomato).